We begin with the raw amino-acid sequence, 483 residues long: Adenylyltransferase and sulfurtransferase uba4 (483 aa).

Residues glycine 100, aspartate 121, 128–132, lysine 145, and 178–179 contribute to the ATP site; these read SNLHR and DN. Positions 227 and 230 each coordinate Zn(2+). Catalysis depends on cysteine 244, which acts as the Glycyl thioester intermediate; for adenylyltransferase activity. Residues cysteine 306 and cysteine 309 each contribute to the Zn(2+) site. The region spanning 366–481 is the Rhodanese domain; that stretch reads ISKEPTIIDV…WREQIDPDWP (116 aa). Cysteine 436 serves as the catalytic Cysteine persulfide intermediate; for sulfurtransferase activity.

This sequence in the N-terminal section; belongs to the HesA/MoeB/ThiF family. UBA4 subfamily. Zn(2+) serves as cofactor.

It localises to the cytoplasm. The protein resides in the cytosol. It catalyses the reaction [molybdopterin-synthase sulfur-carrier protein]-C-terminal Gly-Gly + ATP + H(+) = [molybdopterin-synthase sulfur-carrier protein]-C-terminal Gly-Gly-AMP + diphosphate. The catalysed reaction is [molybdopterin-synthase sulfur-carrier protein]-C-terminal Gly-Gly-AMP + S-sulfanyl-L-cysteinyl-[cysteine desulfurase] + AH2 = [molybdopterin-synthase sulfur-carrier protein]-C-terminal-Gly-aminoethanethioate + L-cysteinyl-[cysteine desulfurase] + A + AMP + 2 H(+). Its pathway is tRNA modification; 5-methoxycarbonylmethyl-2-thiouridine-tRNA biosynthesis. Its function is as follows. Plays a central role in 2-thiolation of mcm(5)S(2)U at tRNA wobble positions of cytosolic tRNA(Lys), tRNA(Glu) and tRNA(Gln). Also essential during biosynthesis of the molybdenum cofactor. Acts by mediating the C-terminal thiocarboxylation of sulfur carriers urm1 and mocs2a. Its N-terminus first activates urm1 and mocs2a as acyl-adenylates (-COAMP), then the persulfide sulfur on the catalytic cysteine is transferred to urm1 and mocs2a to form thiocarboxylation (-COSH) of their C-terminus. The reaction probably involves hydrogen sulfide that is generated from the persulfide intermediate and that acts as a nucleophile towards urm1 and mocs2a. Subsequently, a transient disulfide bond is formed. Does not use thiosulfate as sulfur donor; nfs1 probably acting as a sulfur donor for thiocarboxylation reactions. The chain is Adenylyltransferase and sulfurtransferase uba4 from Neosartorya fischeri (strain ATCC 1020 / DSM 3700 / CBS 544.65 / FGSC A1164 / JCM 1740 / NRRL 181 / WB 181) (Aspergillus fischerianus).